Reading from the N-terminus, the 334-residue chain is Large ribosomal subunit protein uL3 (334 aa).

Basic residues predominate over residues 1 to 10 (MGMKKNRPRR). The disordered stretch occupies residues 1 to 21 (MGMKKNRPRRGSLAFSPRKRA).

Belongs to the universal ribosomal protein uL3 family. As to quaternary structure, part of the 50S ribosomal subunit. Forms a cluster with proteins L14 and L24e.

Its function is as follows. One of the primary rRNA binding proteins, it binds directly near the 3'-end of the 23S rRNA, where it nucleates assembly of the 50S subunit. The chain is Large ribosomal subunit protein uL3 from Methanococcus maripaludis (strain DSM 14266 / JCM 13030 / NBRC 101832 / S2 / LL).